The chain runs to 267 residues: MYYIVASDLDGTLLSPQFYLTEYTKKIIKRLVNKGIYFVIATGRHYNEAKEIQKMLNVPVFLITSNGARIYDLNKKLIYSCDIEQKVVKELLQKCLLNHDILIQLYSHNNWYVSNNNYSASSLYVSFSFRSKIFEFKTIIKKKISKIFFTCKNVKKLLCLEKYIISHWGKYVNVSFSFLNCLEIMSKTVSKGNSLQLIANMLGLSIKNCISFGDGMNDKEMLDMSGKGCMMDNSHYLLKKSLPNLEIIGSNKFDSVAMYLNKIYFKK.

Asp-8 acts as the Nucleophile in catalysis. Residue Asp-8 coordinates Mg(2+). Position 9 (Leu-9) interacts with phosphate. Asp-10 is a binding site for Mg(2+). Residues 42-43 (TG) and Lys-191 contribute to the phosphate site. A Mg(2+)-binding site is contributed by Asp-214. Residue Asn-217 participates in phosphate binding.

This sequence belongs to the HAD-like hydrolase superfamily. Cof family. The cofactor is Mg(2+).

The sequence is that of Putative phosphatase bbp_030 from Buchnera aphidicola subsp. Baizongia pistaciae (strain Bp).